Consider the following 545-residue polypeptide: Probable protein kinase UbiB (545 aa).

Positions Asp-124–Tyr-502 constitute a Protein kinase domain. ATP contacts are provided by residues Leu-130–Val-138 and Lys-153. Asp-288 acts as the Proton acceptor in catalysis. The next 2 helical transmembrane spans lie at Leu-498 to Phe-517 and Val-521 to Trp-540.

The protein belongs to the ABC1 family. UbiB subfamily.

Its subcellular location is the cell inner membrane. It participates in cofactor biosynthesis; ubiquinone biosynthesis [regulation]. Functionally, is probably a protein kinase regulator of UbiI activity which is involved in aerobic coenzyme Q (ubiquinone) biosynthesis. The protein is Probable protein kinase UbiB of Photobacterium profundum (strain SS9).